Consider the following 131-residue polypeptide: Class I hydrophobin POH2 (131 aa).

The first 21 residues, 1–21, serve as a signal peptide directing secretion; sequence MFFRTSSLFTTIVAFTVMAAA. Intrachain disulfides connect cysteine 50–cysteine 110, cysteine 57–cysteine 104, cysteine 58–cysteine 91, and cysteine 111–cysteine 124. N-linked (GlcNAc...) asparagine glycosylation is found at asparagine 115 and asparagine 128.

Belongs to the fungal hydrophobin family. In terms of assembly, self-assembles to form functional amyloid fibrils called rodlets. Self-assembly into fibrillar rodlets occurs spontaneously at hydrophobic:hydrophilic interfaces and the rodlets further associate laterally to form amphipathic monolayers. Expressionn is switched off in the fruiting bodies but abundantly expressed in the vegetative mycelium of both monokaryon and dikaryon.

Its subcellular location is the secreted. It is found in the cell wall. Aerial growth, conidiation, and dispersal of filamentous fungi in the environment rely upon a capability of their secreting small amphipathic proteins called hydrophobins (HPBs) with low sequence identity. Class I can self-assemble into an outermost layer of rodlet bundles on aerial cell surfaces, conferring cellular hydrophobicity that supports fungal growth, development and dispersal; whereas Class II form highly ordered films at water-air interfaces through intermolecular interactions but contribute nothing to the rodlet structure. POH2 is a class I hydrophobin that causes a large drop in the water-surface tension, enabling hyphae to breach the interface and grow into the air, in both the primary and the secondary mycelium. In the latter mycelium POH2 maight also play a role in the emergence of fruiting bodies. Secreted POH2 could also play a role in facilitating lignin degradation. The protein is Class I hydrophobin POH2 of Pleurotus ostreatus (Oyster mushroom).